The chain runs to 200 residues: Ras-related protein Rab-10 (200 aa).

GTP contacts are provided by S18, G19, V20, G21, K22, T23, C24, N35, T36, S40, and T41. T23 serves as a coordination point for Mg(2+). 2 short sequence motifs (switch) span residues 32–46 (DAFN…GIDF) and 64–81 (DTAG…YYRG). Mg(2+) is bound by residues T41 and D64. G67 is a binding site for GTP. Position 73 is a phosphothreonine; by LRRK2 (T73). K102 bears the N6-acetyllysine mark. Residue K102 forms a Glycyl lysine isopeptide (Lys-Gly) (interchain with G-Cter in ubiquitin) linkage. GTP contacts are provided by N122, K123, D125, and M126. A Glycyl lysine isopeptide (Lys-Gly) (interchain with G-Cter in ubiquitin) cross-link involves residue K136. Residues S152, A153, and K154 each coordinate GTP. K154 is covalently cross-linked (Glycyl lysine isopeptide (Lys-Gly) (interchain with G-Cter in ubiquitin)). S-geranylgeranyl cysteine attachment occurs at residues C199 and C200.

It belongs to the small GTPase superfamily. Rab family. Interacts with MYO5A; mediates the transport to the plasma membrane of SLC2A4/GLUT4 storage vesicles. Interacts with GDI1 and with GDI2; negatively regulates RAB10 association with membranes and activation. Interacts (GDP-bound form) with LLGL1; the interaction is direct and promotes RAB10 association with membranes and activation through competition with the Rab inhibitor GDI1. Interacts with EXOC4; probably associates with the exocyst. Interacts (GTP-bound form) with MICALCL, MICAL1, MICAL3, EHBP1 and EHBP1L1; at least in case of MICAL1 two molecules of RAB10 can bind to one molecule of MICAL1. Interacts with TBC1D13. Interacts with SEC16A. Interacts with CHM and CHML. Interacts with LRRK2; interaction facilitates phosphorylation of Thr-73. Interacts (when phosphorylated on Thr-73) with RILPL1 and RILPL2. Interacts with TBC1D21. Interacts with MARCKS. Mg(2+) serves as cofactor. Ubiquitinated upon Legionella pneumophila infection. Ubiquitination does not lead to proteasomal degradation. Post-translationally, phosphorylation of Thr-73 in the switch II region by LRRK2 prevents the association of dRAB regulatory proteins, including CHM, CHML and RAB GDP dissociation inhibitors GDI1 and GDI2. Phosphorylation of Thr-73 by LRRK2 is stimulated by RAB29 and RAB32. Phosphorylation by LRRK2 is required for localization to stressed lysosomes. As to expression, expressed in the hippocampus. Expressed in neutrophils (at protein level). Expressed in the testis (at protein level).

Its subcellular location is the cytoplasmic vesicle membrane. It is found in the golgi apparatus membrane. The protein localises to the golgi apparatus. The protein resides in the trans-Golgi network membrane. It localises to the endosome membrane. Its subcellular location is the recycling endosome membrane. It is found in the cytoplasmic vesicle. The protein localises to the phagosome membrane. The protein resides in the cytoplasm. It localises to the cytoskeleton. Its subcellular location is the cilium basal body. It is found in the endoplasmic reticulum membrane. The protein localises to the perinuclear region. The protein resides in the lysosome. The enzyme catalyses GTP + H2O = GDP + phosphate + H(+). With respect to regulation, regulated by guanine nucleotide exchange factors (GEFs) DENND4C and RABIF which promote the exchange of bound GDP for free GTP. Regulated by GTPase activating proteins (GAPs) including TBC1D21 which increase the GTP hydrolysis activity. Inhibited by GDP dissociation inhibitors GDI1 and GDI2 which prevent Rab-GDP dissociation. The small GTPases Rab are key regulators of intracellular membrane trafficking, from the formation of transport vesicles to their fusion with membranes. Rabs cycle between an inactive GDP-bound form and an active GTP-bound form that is able to recruit to membranes different set of downstream effectors directly responsible for vesicle formation, movement, tethering and fusion. That Rab is mainly involved in the biosynthetic transport of proteins from the Golgi to the plasma membrane. Regulates, for instance, SLC2A4/GLUT4 glucose transporter-enriched vesicles delivery to the plasma membrane. In parallel, it regulates the transport of TLR4, a toll-like receptor to the plasma membrane and therefore may be important for innate immune response. Also plays a specific role in asymmetric protein transport to the plasma membrane. In neurons, it is involved in axonogenesis through regulation of vesicular membrane trafficking toward the axonal plasma membrane. In epithelial cells, it regulates transport from the Golgi to the basolateral membrane. May play a role in the basolateral recycling pathway and in phagosome maturation. May play a role in endoplasmic reticulum dynamics and morphology controlling tubulation along microtubules and tubules fusion. Together with LRRK2, RAB8A, and RILPL1, it regulates ciliogenesis. When phosphorylated by LRRK2 on Thr-73, binds RILPL1 and inhibits ciliogenesis. Participates in the export of a subset of neosynthesized proteins through a Rab8-Rab10-Rab11-dependent endososomal export route. Targeted to and stabilized on stressed lysosomes through LRRK2 phosphorylation where it promotes the extracellular release of lysosomal content through EHBP1 and EHNP1L1 effector proteins. Functionally, (Microbial infection) Upon Legionella pneumophila infection promotes endoplasmic reticulum recruitment and bacterial replication. Plays a role in remodeling the Legionella-containing vacuole (LCV) into an endoplasmic reticulum-like vacuole. The polypeptide is Ras-related protein Rab-10 (Homo sapiens (Human)).